We begin with the raw amino-acid sequence, 548 residues long: Membrane protein insertase YidC (548 aa).

Residues 6 to 26 (NLLVIALLFVSFMIWQAWEQD) traverse the membrane as a helical segment. Residues 28-56 (NPQPQTQQTTQTTTTAAGSAADQGVPASG) are disordered. Low complexity predominate over residues 29–42 (PQPQTQQTTQTTTT). 4 consecutive transmembrane segments (helical) span residues 350-370 (FVGN…GIMY), 424-444 (FPLI…MGSI), 458-478 (LSAQ…MFFI), and 499-519 (PVIF…YYIV).

It belongs to the OXA1/ALB3/YidC family. Type 1 subfamily. Interacts with the Sec translocase complex via SecD. Specifically interacts with transmembrane segments of nascent integral membrane proteins during membrane integration.

The protein localises to the cell inner membrane. Functionally, required for the insertion and/or proper folding and/or complex formation of integral membrane proteins into the membrane. Involved in integration of membrane proteins that insert both dependently and independently of the Sec translocase complex, as well as at least some lipoproteins. Aids folding of multispanning membrane proteins. The sequence is that of Membrane protein insertase YidC from Salmonella choleraesuis (strain SC-B67).